The chain runs to 1215 residues: MASQVLVYPPYVYQTQSSAFCSVKKLKVEPSSCVFQERNYPRTYVNGRNFGNSHPPTKGSAFQTKIPFNRPRGHNFSLQTSAVVLKNTAGATKVIAAQAQQAHVQAPQIGAWRNRLHFLEGPQRCGLKRKSEELDNHSSAMQIVDELSILPAMLQTNMGNPVTVVTATTGSKQNCTTGEGDYQLVQHEVLCSMKNTYEVLDFLGRGTFGQVVKCWKRGTNEIVAIKILKNHPSYARQGQIEVSILARLSTENADEYNFVRAYECFQHRNHTCLVFEMLEQNLYDFLKQNKFSPLPLKVIRPILQQVATALKKLKSLGLIHADLKPENIMLVDPVRQPYRVKVIDFGSASHVSKTVCSTYLQSRYYRAPEIILGLPFCEAIDMWSLGCVIAELFLGWPLYPGALEYDQIRYISQTQGLPGEQLLNVGTKSTRFFCKETDMSHSGWRLKTLEEHEAETGMKSKEARKYIFNSLDDVAHVNTVMDLEGSDLLAEKADRREFVSLLKKMLLIDADLRITPAETLNHPFVNMKHLLDFPHSNHVKSCFHIMDICKSHLNSCDTNNHNKTSLLRPVASSSTATLTANFTKIGTLRSQALTTSAHSVVHHGIPLQAGTAQFGCGDAFQQTLIICPPAIQGIPATHGKPTSYSIRVDNTVPLVTQAPAVQPLQIRPGVLSQTWSGRTQQMLVPAWQQVTPLAPATTTLTSESVAGSHRLGDWGKMISCSNHYNSVMPQPLLTNQITLSAPQPVSVGIAHVVWPQPATTKKNKQCQNRGILVKLMEWEPGREEINAFSWSNSLQNTNIPHSAFISPKIINGKDVEEVSCIETQDNQNSEGEARNCCETSIRQDSDSSVSDKQRQTIIIADSPSPAVSVITISSDTDEEETSQRHSLRECKGSLDCEACQSTLNIDRMCSLSSPDSTLSTSSSGQSSPSPCKRPNSMSDEEQESSCDTVDGSPTSDSSGHDSPFAESTFVEDTHENTELVSSADTETKPAVCSVVVPPVELENGLNADEHMANTDSICQPLIKGRSAPGRLNQPSAVGTRQQKLTSAFQQQHLNFSQVQHFGSGHQEWNGNFGHRRQQAYIPTSVTSNPFTLSHGSPNHTAVHAHLAGNTHLGGQPTLLPYPSSATLSSAAPVAHLLASPCTSRPMLQHPTYNISHPSGIVHQVPVGLNPRLLPSPTIHQTQYKPIFPPHSYIAASPAYTGFPLSPTKLSQYPYM.

Residue Lys27 forms a Glycyl lysine isopeptide (Lys-Gly) (interchain with G-Cter in SUMO2) linkage. Positions 197-525 constitute a Protein kinase domain; it reads YEVLDFLGRG…PAETLNHPFV (329 aa). ATP contacts are provided by residues 203–211 and Lys226; that span reads LGRGTFGQV. Asp322 serves as the catalytic Proton acceptor. At Tyr359 the chain carries Phosphotyrosine. An interaction with AR region spans residues 767–944; it reads QNRGILVKLM…NSMSDEEQES (178 aa). An interaction with FAS region spans residues 796–891; the sequence is NTNIPHSAFI…SQRHSLRECK (96 aa). Residues 855-1011 form a required for localization to nuclear speckles region; sequence QTIIIADSPS…ENGLNADEHM (157 aa). Residues 866 to 918 are SUMO interaction motifs (SIM); required for nuclear localization and kinase activity; sequence AVSVITISSDTDEEETSQRHSLRECKGSLDCEACQSTLNIDRMCSLSSPDSTL. The interaction with UBL1 stretch occupies residues 870 to 880; it reads ITISSDTDEEE. The segment covering 912–929 has biased composition (low complexity); sequence SSPDSTLSTSSSGQSSPS. The disordered stretch occupies residues 912–987; sequence SSPDSTLSTS…ELVSSADTET (76 aa). Residues 945 to 957 are compositionally biased toward polar residues; sequence SCDTVDGSPTSDS. Residue Lys1208 forms a Glycyl lysine isopeptide (Lys-Gly) (interchain with G-Cter in SUMO) linkage.

This sequence belongs to the protein kinase superfamily. CMGC Ser/Thr protein kinase family. HIPK subfamily. In terms of assembly, interacts with Nkx1-2. Interacts with FAS and DAXX. Probably part of a complex consisting of HIPK3, FAS and FADD. Interacts with and stabilizes ligand-bound androgen receptor (AR). Interacts with UBL1/SUMO-1. Binds to NR5A1/SF1, SPEN/MINT and RUNX2. In terms of processing, autophosphorylated, but autophosphorylation is not required for catalytic activity. Post-translationally, may be sumoylated. As to expression, overexpressed in multidrug resistant cells. Highly expressed in heart and skeletal muscle, and at lower levels in placenta, pancreas, brain, spleen, prostate, thymus, testis, small intestine, colon and leukocytes. Not found in liver and lung.

Its subcellular location is the cytoplasm. It localises to the nucleus. It catalyses the reaction L-seryl-[protein] + ATP = O-phospho-L-seryl-[protein] + ADP + H(+). The catalysed reaction is L-threonyl-[protein] + ATP = O-phospho-L-threonyl-[protein] + ADP + H(+). In terms of biological role, serine/threonine-protein kinase involved in transcription regulation, apoptosis and steroidogenic gene expression. Phosphorylates JUN and RUNX2. Seems to negatively regulate apoptosis by promoting FADD phosphorylation. Enhances androgen receptor-mediated transcription. May act as a transcriptional corepressor for NK homeodomain transcription factors. The phosphorylation of NR5A1 activates SF1 leading to increased steroidogenic gene expression upon cAMP signaling pathway stimulation. In osteoblasts, supports transcription activation: phosphorylates RUNX2 that synergizes with SPEN/MINT to enhance FGFR2-mediated activation of the osteocalcin FGF-responsive element (OCFRE). In Homo sapiens (Human), this protein is Homeodomain-interacting protein kinase 3 (HIPK3).